The following is a 186-amino-acid chain: UPF0303 protein ZMO1353 (186 aa).

This sequence belongs to the UPF0303 family.

The sequence is that of UPF0303 protein ZMO1353 from Zymomonas mobilis subsp. mobilis (strain ATCC 31821 / ZM4 / CP4).